The following is a 363-amino-acid chain: MKIKVLLAVALLAMTVPVKAERIKDIAAVQGVRSNQLIGYGLVVGLPGTGEKANYTEQTFTTMLKNFGINLPTNVKPKIKNVAVVAVHADMPPFIKPGQTLDVTVSSIGEAKSLRGGTLLQTFLKGVDGNIYAIAQGSMVVSGFSAEGLDGSKVIQNTPTVGRIPNGALVERAVPSAFAHGDFLTFNLHRADFSTAKRMADAINDLLGPEMARALDAASVQVYAPRDASQRVSFLATLENVEVEPADESAKVIVNSRTGTIVVGQNVKLLPAAVTHGGLTVTIAENQQVSQPNALAGGDTVVTNQSTIDASQANSRMFLFNPGTSLDELVRAVNLVGAAPSDVLAILEALKMAGALHGELIVI.

Positions 1 to 20 are cleaved as a signal peptide; it reads MKIKVLLAVALLAMTVPVKA.

It belongs to the FlgI family. The basal body constitutes a major portion of the flagellar organelle and consists of four rings (L,P,S, and M) mounted on a central rod.

It is found in the periplasm. The protein resides in the bacterial flagellum basal body. Its function is as follows. Assembles around the rod to form the L-ring and probably protects the motor/basal body from shearing forces during rotation. The polypeptide is Flagellar P-ring protein (Shewanella amazonensis (strain ATCC BAA-1098 / SB2B)).